The chain runs to 70 residues: Small ribosomal subunit protein bS21 (70 aa).

The protein belongs to the bacterial ribosomal protein bS21 family.

The polypeptide is Small ribosomal subunit protein bS21 (Helicobacter pylori (strain P12)).